The primary structure comprises 191 residues: Ferric nitrobindin-like protein (191 aa).

The GXWXGXG motif lies at 20 to 26 (GNWAGAG).

This sequence belongs to the nitrobindin family.

The protein is Ferric nitrobindin-like protein of Streptomyces avermitilis (strain ATCC 31267 / DSM 46492 / JCM 5070 / NBRC 14893 / NCIMB 12804 / NRRL 8165 / MA-4680).